We begin with the raw amino-acid sequence, 433 residues long: Trigger factor (433 aa).

Residues 163 to 248 form the PPIase FKBP-type domain; sequence GDTVNIDFSG…VNEIKFKEVP (86 aa).

This sequence belongs to the FKBP-type PPIase family. Tig subfamily.

Its subcellular location is the cytoplasm. The enzyme catalyses [protein]-peptidylproline (omega=180) = [protein]-peptidylproline (omega=0). Involved in protein export. Acts as a chaperone by maintaining the newly synthesized protein in an open conformation. Functions as a peptidyl-prolyl cis-trans isomerase. This Staphylococcus aureus (strain Newman) protein is Trigger factor.